The chain runs to 927 residues: Probable RNA-dependent RNA polymerase 4 (927 aa).

The segment at 98–135 (GESPVQFPRTPGKKSCRASQAEVSLDREDPSPKFLRGD) is disordered. Positions 121–135 (SLDREDPSPKFLRGD) are enriched in basic and acidic residues.

This sequence belongs to the RdRP family.

It carries out the reaction RNA(n) + a ribonucleoside 5'-triphosphate = RNA(n+1) + diphosphate. In terms of biological role, probably involved in the RNA silencing pathway and required for the generation of small interfering RNAs (siRNAs). The protein is Probable RNA-dependent RNA polymerase 4 (RDR4) of Arabidopsis thaliana (Mouse-ear cress).